We begin with the raw amino-acid sequence, 414 residues long: Probable sugar-binding periplasmic protein (414 aa).

The first 22 residues, 1–22, serve as a signal peptide directing secretion; the sequence is MRKFMTTTAVAALMLAATAARA.

This sequence belongs to the bacterial solute-binding protein 1 family.

The protein resides in the periplasm. Functionally, part of a binding-protein-dependent transport system for a sugar. The chain is Probable sugar-binding periplasmic protein from Rhizobium meliloti (strain 1021) (Ensifer meliloti).